The primary structure comprises 264 residues: H-2 class II histocompatibility antigen, E-D beta chain (264 aa).

A signal peptide spans 1 to 31 (MVWLPRVPCVAAVILLLTVLSPPVALVRDTR). The tract at residues 32–121 (PRFLEYVTSE…ISDKFLVRRR (90 aa)) is beta-1. The Extracellular segment spans residues 32–225 (PRFLEYVTSE…KAQSTSAQNK (194 aa)). Disulfide bonds link C42-C106 and C144-C200. A glycan (N-linked (GlcNAc...) asparagine) is linked at N46. A beta-2 region spans residues 122–215 (VEPTVTVYPT…SLTDPVTVEW (94 aa)). Positions 124–214 (PTVTVYPTKT…PSLTDPVTVE (91 aa)) constitute an Ig-like C1-type domain. The interval 216–225 (KAQSTSAQNK) is connecting peptide. A helical membrane pass occupies residues 226–248 (MLSGVGGFVLGLLFLGAGLFIYF). At 249-264 (RNQKGQSGLQPTGLLS) the chain is on the cytoplasmic side.

Belongs to the MHC class II family.

It localises to the membrane. In Mus musculus (Mouse), this protein is H-2 class II histocompatibility antigen, E-D beta chain.